The sequence spans 477 residues: Ribulose bisphosphate carboxylase large chain (477 aa).

The propeptide occupies 1 to 2 (MS). Pro3 is modified (N-acetylproline). Lys14 carries the N6,N6,N6-trimethyllysine modification. Positions 123 and 173 each coordinate substrate. Lys175 functions as the Proton acceptor in the catalytic mechanism. Lys177 is a binding site for substrate. Lys201, Asp203, and Glu204 together coordinate Mg(2+). Lys201 is subject to N6-carboxylysine. His294 functions as the Proton acceptor in the catalytic mechanism. 3 residues coordinate substrate: Arg295, His327, and Ser379.

This sequence belongs to the RuBisCO large chain family. Type I subfamily. Heterohexadecamer of 8 large chains and 8 small chains; disulfide-linked. The disulfide link is formed within the large subunit homodimers. It depends on Mg(2+) as a cofactor. The disulfide bond which can form in the large chain dimeric partners within the hexadecamer appears to be associated with oxidative stress and protein turnover.

It is found in the plastid. The protein resides in the chloroplast. It carries out the reaction 2 (2R)-3-phosphoglycerate + 2 H(+) = D-ribulose 1,5-bisphosphate + CO2 + H2O. The catalysed reaction is D-ribulose 1,5-bisphosphate + O2 = 2-phosphoglycolate + (2R)-3-phosphoglycerate + 2 H(+). In terms of biological role, ruBisCO catalyzes two reactions: the carboxylation of D-ribulose 1,5-bisphosphate, the primary event in carbon dioxide fixation, as well as the oxidative fragmentation of the pentose substrate in the photorespiration process. Both reactions occur simultaneously and in competition at the same active site. The sequence is that of Ribulose bisphosphate carboxylase large chain from Persea americana (Avocado).